The primary structure comprises 473 residues: Photosystem II CP43 reaction center protein (473 aa).

Positions 1 to 14 (MKTLYSLRRFYHVE) are excised as a propeptide. Position 15 is an N-acetylthreonine (Thr-15). Phosphothreonine is present on Thr-15. Transmembrane regions (helical) follow at residues 69-93 (LFEVAHFVPEKPMYEQGLILLPHLA), 134-155 (LLGPETLEESFPFFGYVWKDRN), 178-200 (KALYFGGVYDTWAPGGGDVRKIT), 255-275 (KPFAWARRALVWSGEAYLSYS), and 291-312 (WFNNTAYPSEFYGPTGPEASQA). Residue Glu-367 coordinates [CaMn4O5] cluster. The chain crosses the membrane as a helical span at residues 447–471 (RARAAAAGFEKGIDRDFEPVLSMTP).

Belongs to the PsbB/PsbC family. PsbC subfamily. PSII is composed of 1 copy each of membrane proteins PsbA, PsbB, PsbC, PsbD, PsbE, PsbF, PsbH, PsbI, PsbJ, PsbK, PsbL, PsbM, PsbT, PsbX, PsbY, PsbZ, Psb30/Ycf12, at least 3 peripheral proteins of the oxygen-evolving complex and a large number of cofactors. It forms dimeric complexes. Binds multiple chlorophylls and provides some of the ligands for the Ca-4Mn-5O cluster of the oxygen-evolving complex. It may also provide a ligand for a Cl- that is required for oxygen evolution. PSII binds additional chlorophylls, carotenoids and specific lipids. is required as a cofactor.

It localises to the plastid. Its subcellular location is the chloroplast thylakoid membrane. Functionally, one of the components of the core complex of photosystem II (PSII). It binds chlorophyll and helps catalyze the primary light-induced photochemical processes of PSII. PSII is a light-driven water:plastoquinone oxidoreductase, using light energy to abstract electrons from H(2)O, generating O(2) and a proton gradient subsequently used for ATP formation. This chain is Photosystem II CP43 reaction center protein, found in Atropa belladonna (Belladonna).